The chain runs to 886 residues: Leucine--tRNA ligase (886 aa).

Positions 46–56 match the 'HIGH' region motif; that stretch reads PYPSGKLHMGH. The 'KMSKS' region signature appears at 638–642; sequence TMSKS. Lys641 provides a ligand contact to ATP.

The protein belongs to the class-I aminoacyl-tRNA synthetase family.

It is found in the cytoplasm. It catalyses the reaction tRNA(Leu) + L-leucine + ATP = L-leucyl-tRNA(Leu) + AMP + diphosphate. This chain is Leucine--tRNA ligase, found in Polaromonas sp. (strain JS666 / ATCC BAA-500).